Reading from the N-terminus, the 206-residue chain is Large ribosomal subunit protein uL4 (206 aa).

The protein belongs to the universal ribosomal protein uL4 family. As to quaternary structure, part of the 50S ribosomal subunit.

Its function is as follows. One of the primary rRNA binding proteins, this protein initially binds near the 5'-end of the 23S rRNA. It is important during the early stages of 50S assembly. It makes multiple contacts with different domains of the 23S rRNA in the assembled 50S subunit and ribosome. Forms part of the polypeptide exit tunnel. In Afipia carboxidovorans (strain ATCC 49405 / DSM 1227 / KCTC 32145 / OM5) (Oligotropha carboxidovorans), this protein is Large ribosomal subunit protein uL4.